The primary structure comprises 159 residues: Phosphopantetheine adenylyltransferase (159 aa).

Position 10 (Thr10) interacts with substrate. Residues 10–11 (TF) and His18 contribute to the ATP site. Positions 42, 74, and 88 each coordinate substrate. ATP-binding positions include 89-91 (GLR), Glu99, and 124-130 (NAFISSS).

It belongs to the bacterial CoaD family. As to quaternary structure, homohexamer. The cofactor is Mg(2+).

It localises to the cytoplasm. It catalyses the reaction (R)-4'-phosphopantetheine + ATP + H(+) = 3'-dephospho-CoA + diphosphate. Its pathway is cofactor biosynthesis; coenzyme A biosynthesis; CoA from (R)-pantothenate: step 4/5. Functionally, reversibly transfers an adenylyl group from ATP to 4'-phosphopantetheine, yielding dephospho-CoA (dPCoA) and pyrophosphate. The protein is Phosphopantetheine adenylyltransferase of Campylobacter fetus subsp. fetus (strain 82-40).